The sequence spans 130 residues: Histone H2A type 1 (130 aa).

The disordered stretch occupies residues 1–22 (MSGRGKQGGKARAKAKSRSSRA). Ser-2 is subject to N-acetylserine. Ser-2 bears the Phosphoserine; by RPS6KA5 mark. The residue at position 4 (Arg-4) is a Citrulline; alternate. Arg-4 carries the symmetric dimethylarginine; by PRMT5; alternate modification. Position 6 is an N6-(2-hydroxyisobutyryl)lysine (Lys-6). Residues 7 to 19 (QGGKARAKAKSRS) are compositionally biased toward basic residues. Residue Lys-10 is modified to N6-(2-hydroxyisobutyryl)lysine; alternate. Position 10 is an N6-lactoyllysine; alternate (Lys-10). Position 10 is an N6-succinyllysine; alternate (Lys-10). Glycyl lysine isopeptide (Lys-Gly) (interchain with G-Cter in ubiquitin) cross-links involve residues Lys-14 and Lys-16. An N6-(2-hydroxyisobutyryl)lysine; alternate modification is found at Lys-37. N6-(beta-hydroxybutyryl)lysine; alternate is present on Lys-37. Residue Lys-37 is modified to N6-crotonyllysine; alternate. 2 positions are modified to N6-(2-hydroxyisobutyryl)lysine: Lys-75 and Lys-76. Lys-96 is modified (N6-(2-hydroxyisobutyryl)lysine; alternate). The residue at position 96 (Lys-96) is an N6-succinyllysine; alternate. Lys-96 is modified (N6-glutaryllysine; alternate). At Lys-100 the chain carries N6-glutaryllysine. Gln-105 bears the N5-methylglutamine mark. Lys-119 carries the N6-(2-hydroxyisobutyryl)lysine; alternate modification. Residues Lys-119 and Lys-120 each carry the N6-crotonyllysine; alternate modification. 2 positions are modified to N6-glutaryllysine; alternate: Lys-119 and Lys-120. Lys-120 participates in a covalent cross-link: Glycyl lysine isopeptide (Lys-Gly) (interchain with G-Cter in ubiquitin); alternate. Phosphothreonine; by DCAF1 is present on Thr-121. At Lys-126 the chain carries N6-crotonyllysine; alternate. The residue at position 126 (Lys-126) is an N6-glutaryllysine; alternate.

Belongs to the histone H2A family. The nucleosome is a histone octamer containing two molecules each of H2A, H2B, H3 and H4 assembled in one H3-H4 heterotetramer and two H2A-H2B heterodimers. The octamer wraps approximately 147 bp of DNA. Interacts with VRK1; the interaction is mediated by the nucleosome acidic patch, a cluster of negatively charged residues of H2A and H2B forming a cleft within the nucleosome core. Post-translationally, deiminated on Arg-4 in granulocytes upon calcium entry. In terms of processing, monoubiquitination of Lys-120 (H2AK119Ub) by RING1, TRIM37 and RNF2/RING2 complex gives a specific tag for epigenetic transcriptional repression and participates in X chromosome inactivation of female mammals. It is involved in the initiation of both imprinted and random X inactivation. Ubiquitinated H2A is enriched in inactive X chromosome chromatin. Ubiquitination of H2A functions downstream of methylation of 'Lys-27' of histone H3 (H3K27me). H2AK119Ub by RNF2/RING2 can also be induced by ultraviolet and may be involved in DNA repair. Following DNA double-strand breaks (DSBs), it is ubiquitinated through 'Lys-63' linkage of ubiquitin moieties by the E2 ligase UBE2N and the E3 ligases RNF8 and RNF168, leading to the recruitment of repair proteins to sites of DNA damage. Ubiquitination at Lys-14 and Lys-16 (H2AK13Ub and H2AK15Ub, respectively) in response to DNA damage is initiated by RNF168 that mediates monoubiquitination at these 2 sites, and 'Lys-63'-linked ubiquitin are then conjugated to monoubiquitin; RNF8 is able to extend 'Lys-63'-linked ubiquitin chains in vitro. H2AK119Ub and ionizing radiation-induced 'Lys-63'-linked ubiquitination (H2AK13Ub and H2AK15Ub) are distinct events. Phosphorylation on Ser-2 (H2AS1ph) is enhanced during mitosis. Phosphorylation on Ser-2 by RPS6KA5/MSK1 directly represses transcription. Acetylation of H3 inhibits Ser-2 phosphorylation by RPS6KA5/MSK1. Phosphorylation at Thr-121 (H2AT120ph) by DCAF1 is present in the regulatory region of many tumor suppresor genes and down-regulates their transcription. Post-translationally, symmetric dimethylation on Arg-4 by the PRDM1/PRMT5 complex may play a crucial role in the germ-cell lineage. In terms of processing, glutamine methylation at Gln-105 (H2AQ104me) by FBL is specifically dedicated to polymerase I. It is present at 35S ribosomal DNA locus and impairs binding of the FACT complex. Crotonylation (Kcr) is specifically present in male germ cells and marks testis-specific genes in post-meiotic cells, including X-linked genes that escape sex chromosome inactivation in haploid cells. Crotonylation marks active promoters and enhancers and confers resistance to transcriptional repressors. It is also associated with post-meiotically activated genes on autosomes. Post-translationally, lactylated in macrophages by EP300/P300 by using lactoyl-CoA directly derived from endogenous or exogenous lactate, leading to stimulates gene transcription.

The protein localises to the nucleus. It localises to the chromosome. Core component of nucleosome. Nucleosomes wrap and compact DNA into chromatin, limiting DNA accessibility to the cellular machineries which require DNA as a template. Histones thereby play a central role in transcription regulation, DNA repair, DNA replication and chromosomal stability. DNA accessibility is regulated via a complex set of post-translational modifications of histones, also called histone code, and nucleosome remodeling. This chain is Histone H2A type 1, found in Rattus norvegicus (Rat).